The sequence spans 373 residues: 3 beta-hydroxysteroid dehydrogenase/Delta 5--&gt;4-isomerase type 1 (373 aa).

NADP(+) is bound by residues 10–15 (GAGGFV), Tyr155, and Lys159. Lys159 acts as the Proton donor in catalysis. A helical membrane pass occupies residues 288-308 (LPLLYWLAFLLETVSFLLRPV).

The protein belongs to the 3-beta-HSD family. As to expression, steroidogenic tissues (includes testes, ovaries and adrenal glands).

It localises to the endoplasmic reticulum membrane. It is found in the mitochondrion membrane. It catalyses the reaction a 3beta-hydroxy-Delta(5)-steroid + NAD(+) = a 3-oxo-Delta(5)-steroid + NADH + H(+). The enzyme catalyses pregnenolone + NAD(+) = pregn-5-ene-3,20-dione + NADH + H(+). It carries out the reaction 3beta-hydroxyandrost-5-en-17-one + NAD(+) = androst-5-ene-3,17-dione + NADH + H(+). The catalysed reaction is androst-5-en-3beta,17beta-diol + NAD(+) = 17beta-hydroxy-androst-5-en-3-one + NADH + H(+). It catalyses the reaction a 3beta-hydroxysteroid + NADP(+) = a 3-oxosteroid + NADPH + H(+). The enzyme catalyses 5alpha-androstane-3beta,17beta-diol + NADP(+) = 17beta-hydroxy-5alpha-androstan-3-one + NADPH + H(+). It carries out the reaction 3beta-hydroxy-5alpha-androstan-17-one + NADP(+) = 5alpha-androstan-3,17-dione + NADPH + H(+). The catalysed reaction is a 3-oxo-Delta(5)-steroid = a 3-oxo-Delta(4)-steroid. It catalyses the reaction pregn-5-ene-3,20-dione = progesterone. The enzyme catalyses androst-5-ene-3,17-dione = androst-4-ene-3,17-dione. It carries out the reaction 17beta-hydroxy-androst-5-en-3-one = testosterone. The catalysed reaction is 5alpha-androstane-3beta,17beta-diol + NAD(+) = 17beta-hydroxy-5alpha-androstan-3-one + NADH + H(+). It functions in the pathway steroid hormone biosynthesis. The protein operates within steroid metabolism. A bifunctional enzyme responsible for the oxidation and isomerization of 3beta-hydroxy-Delta(5)-steroid precursors to 3-oxo-Delta(4)-steroids, an essential step in steroid hormone biosynthesis. Specifically catalyzes the conversion of pregnenolone to progesterone, 17alpha-hydroxypregnenolone to 17alpha-hydroxyprogesterone, dehydroepiandrosterone (DHEA) to 4-androstenedione, and androstenediol to testosterone. Additionally, catalyzes the interconversion between 3beta-hydroxy and 3-oxo-5alpha-androstane steroids controlling the bioavalability of the active forms. Specifically converts dihydrotestosterone to its inactive form 5alpha-androstanediol, that does not bind androgen receptor/AR. Also converts androstanedione, a precursor of testosterone and estrone, to epiandrosterone. Expected to use NAD(+) as preferred electron donor for the 3-beta-hydroxy-steroid dehydrogenase activity and NADPH for the 3-ketosteroid reductase activity. This Mus musculus (Mouse) protein is 3 beta-hydroxysteroid dehydrogenase/Delta 5--&gt;4-isomerase type 1.